The following is an 845-amino-acid chain: Alanine--tRNA ligase (845 aa).

Zn(2+)-binding residues include histidine 552, histidine 556, cysteine 653, and histidine 657.

Belongs to the class-II aminoacyl-tRNA synthetase family. Requires Zn(2+) as cofactor.

The protein localises to the cytoplasm. The catalysed reaction is tRNA(Ala) + L-alanine + ATP = L-alanyl-tRNA(Ala) + AMP + diphosphate. Its function is as follows. Catalyzes the attachment of alanine to tRNA(Ala) in a two-step reaction: alanine is first activated by ATP to form Ala-AMP and then transferred to the acceptor end of tRNA(Ala). Also edits incorrectly charged Ser-tRNA(Ala) and Gly-tRNA(Ala) via its editing domain. This chain is Alanine--tRNA ligase, found in Campylobacter fetus subsp. fetus (strain 82-40).